The following is a 156-amino-acid chain: Histone acetyltransferase HPA2 (156 aa).

Positions 9–156 constitute an N-acetyltransferase domain; the sequence is ITVRFVTEND…PKILYKRKGY (148 aa). Acetyl-CoA is bound at residue 93–106; that stretch reads LYVDENSRVKGAGG.

The protein belongs to the acetyltransferase family. GNAT subfamily. Forms homodimers in the absence, and homotetramers in the presence of acetyl-CoA. Post-translationally, autoacetylates in an intermolecular reaction.

The catalysed reaction is L-lysyl-[protein] + acetyl-CoA = N(6)-acetyl-L-lysyl-[protein] + CoA + H(+). Its function is as follows. N-acetyltransferase that acetylates histone H3 at 'Lys-14' and histone H4 at 'Lys-5' and 'Lys-12'. Also acetylates polyamines like putrescine, spermidine and spermine, and certain other small basic proteins like nuclear HMG proteins. The chain is Histone acetyltransferase HPA2 from Saccharomyces cerevisiae (strain ATCC 204508 / S288c) (Baker's yeast).